The chain runs to 360 residues: DNA replication and repair protein RecF (360 aa).

33-40 (GENGSGKT) lines the ATP pocket.

The protein belongs to the RecF family.

Its subcellular location is the cytoplasm. The RecF protein is involved in DNA metabolism; it is required for DNA replication and normal SOS inducibility. RecF binds preferentially to single-stranded, linear DNA. It also seems to bind ATP. The chain is DNA replication and repair protein RecF from Rickettsia africae (strain ESF-5).